Reading from the N-terminus, the 460-residue chain is Cysteine--tRNA ligase (460 aa).

Residue cysteine 28 coordinates Zn(2+). Positions 30 to 40 match the 'HIGH' region motif; it reads VTIYDLCHIGH. Residues cysteine 209, histidine 234, and glutamate 238 each coordinate Zn(2+). The 'KMSKS' region motif lies at 266–270; sequence KMSKS. Lysine 269 lines the ATP pocket.

It belongs to the class-I aminoacyl-tRNA synthetase family. Monomer. Zn(2+) serves as cofactor.

It is found in the cytoplasm. It catalyses the reaction tRNA(Cys) + L-cysteine + ATP = L-cysteinyl-tRNA(Cys) + AMP + diphosphate. The polypeptide is Cysteine--tRNA ligase (Vibrio vulnificus (strain YJ016)).